Here is a 310-residue protein sequence, read N- to C-terminus: Endo-1,4-beta-xylanase B (310 aa).

Residues 1–19 (MISLSSVAIALTTVVGALA) form the signal peptide. The 191-residue stretch at 33 to 223 (AITSSQTGTN…SSGSASMTVS (191 aa)) folds into the GH11 domain. The active-site Nucleophile is Glu-119. Glu-210 (proton donor) is an active-site residue. Residues 218–227 (ASMTVSAGSS) are compositionally biased toward low complexity. The disordered stretch occupies residues 218-274 (ASMTVSAGSSSSGGSGSGSGSGSGSGSGSGSQTTTAGSSTGTGTGSGSGSGSGGSGG). A compositionally biased stretch (gly residues) spans 228–246 (SSGGSGSGSGSGSGSGSGS). The segment covering 247-256 (GSQTTTAGSS) has biased composition (low complexity). Over residues 257 to 274 (TGTGTGSGSGSGSGGSGG) the composition is skewed to gly residues. The CBM1 domain maps to 275-310 (NCAAQWGQCGGQGWNGPTCCSSGTCKASNQWYSQCL).

This sequence belongs to the glycosyl hydrolase 11 (cellulase G) family.

It localises to the secreted. It catalyses the reaction Endohydrolysis of (1-&gt;4)-beta-D-xylosidic linkages in xylans.. It participates in glycan degradation; xylan degradation. Endo-1,4-beta-xylanase involved in the hydrolysis of xylan, a major structural heterogeneous polysaccharide found in plant biomass representing the second most abundant polysaccharide in the biosphere, after cellulose. Hydrolyzes birchwood xylan, beechwood xylan, and oat spelt xylan to produce short-chain xylooligosaccharides, xylopentaose, xylotriose, and xylobiose as the main products. This chain is Endo-1,4-beta-xylanase B (xynB), found in Penicillium oxalicum.